Reading from the N-terminus, the 374-residue chain is Chaperone protein DnaJ (374 aa).

Residues 5 to 70 form the J domain; sequence DYYEVLGVNL…RKRASYDQFG (66 aa). The CR-type zinc finger occupies 133-210; it reads GLSRTIKVPT…CHGQGRQQQT (78 aa). Zn(2+)-binding residues include Cys146, Cys149, Cys162, Cys165, Cys184, Cys187, Cys198, and Cys201. CXXCXGXG motif repeat units lie at residues 146 to 153, 162 to 169, 184 to 191, and 198 to 205; these read CKTCNGSG, CPRCNGSG, CSVCRGRG, and CTDCHGQG.

This sequence belongs to the DnaJ family. As to quaternary structure, homodimer. Zn(2+) is required as a cofactor.

The protein localises to the cytoplasm. In terms of biological role, participates actively in the response to hyperosmotic and heat shock by preventing the aggregation of stress-denatured proteins and by disaggregating proteins, also in an autonomous, DnaK-independent fashion. Unfolded proteins bind initially to DnaJ; upon interaction with the DnaJ-bound protein, DnaK hydrolyzes its bound ATP, resulting in the formation of a stable complex. GrpE releases ADP from DnaK; ATP binding to DnaK triggers the release of the substrate protein, thus completing the reaction cycle. Several rounds of ATP-dependent interactions between DnaJ, DnaK and GrpE are required for fully efficient folding. Also involved, together with DnaK and GrpE, in the DNA replication of plasmids through activation of initiation proteins. The protein is Chaperone protein DnaJ of Coxiella burnetii (strain RSA 493 / Nine Mile phase I).